We begin with the raw amino-acid sequence, 58 residues long: Large ribosomal subunit protein eL20 (58 aa).

Positions 37–58 are disordered; it reads TTVGSQHNRKRPQIEIKEVSAA. The segment covering 48–58 has biased composition (basic and acidic residues); sequence PQIEIKEVSAA.

It belongs to the eukaryotic ribosomal protein eL20 family. As to quaternary structure, part of the 50S ribosomal subunit. Binds 23S rRNA.

The sequence is that of Large ribosomal subunit protein eL20 from Halorubrum lacusprofundi (strain ATCC 49239 / DSM 5036 / JCM 8891 / ACAM 34).